The following is a 339-amino-acid chain: Replication factor C subunit 5 (339 aa).

An ATP-binding site is contributed by 59–66; sequence GPPGTGKT.

Belongs to the activator 1 small subunits family. In terms of assembly, subunit of the RFC complex, an heteropentameric complex consisting of a large subunit RFC1 and four small subunits RFC2, RFC3, RFC4 and RFC5; the RFC complex interacts with PCNA. Forms an heterotetrameric complex with RFC2, RFC3 and RFC4; this complex has ATPase activity but is not stimulated by PCNA. The heterotetramer of subunits RFC2, RFC3, RFC4 and RFC5 interacts with RAD17.

It localises to the nucleus. Its function is as follows. Subunit of the replication factor C (RFC) complex which acts during elongation of primed DNA templates by DNA polymerases delta and epsilon, and is necessary for ATP-dependent loading of proliferating cell nuclear antigen (PCNA) onto primed DNA. The polypeptide is Replication factor C subunit 5 (Rfc5) (Mus musculus (Mouse)).